The following is a 135-amino-acid chain: Small ribosomal subunit protein uS11 (135 aa).

Belongs to the universal ribosomal protein uS11 family. In terms of assembly, part of the 30S ribosomal subunit. Interacts with proteins S7 and S18. Binds to IF-3.

Functionally, located on the platform of the 30S subunit, it bridges several disparate RNA helices of the 16S rRNA. Forms part of the Shine-Dalgarno cleft in the 70S ribosome. The sequence is that of Small ribosomal subunit protein uS11 from Solibacter usitatus (strain Ellin6076).